Reading from the N-terminus, the 638-residue chain is MTYALLNKIDAPADLRKLDRRELQTLADELRAYVLESVSQTGGHLSSNLGTVELTIALHYVFNTPDDRLVWDVGHQSYPHKILTGRRERMRTLRQWGGISGFPRRSESEYDTFGTAHSSTSISAALGMALGARTLGQKRVSVAVIGDGAMTAGMAFEALNNAGVYKDLPLVVVLNDNDMSISPPVGALNRHLARLLSGQFYAATKKGIEKVLSVAPPVLEFAKRFEEHAKGMMVPATLFEEFGFNYIGPIDGHDLNSLVPTLQNIRERALEGGGPQFLHVVTKKGQGYKLAEADPILYHGPGKFNPAEGIRPAAKPARKTYTQVFGDWLCDMAAADKRLVGITPAMREGSGMVEFEKRFPDRYYDVGIAEQHAVTFAGGLACEGLKPVVAIYSTFLQRGYDQLIHDVALQNLPVVFALDRAGLVGADGATHAGAYDIAYLRCIPNMMVMTPSDENECRQLLTTAFQQDCPTAVRYPRGSGPGAAIAADLAPVPVGKGVVRREAGARAGHRVGFLAFGSMVQPALGAAEALDATVADMRFVKPLDVALVKRLAADHDYLVTVEEGSVMGGAGSAVLEALAEAGIDKPVLTLGLPDRFVDHGDPAFLLQQCGLDAAGIERSVRERFGLDQPQVTVAPRVA.

Thiamine diphosphate contacts are provided by residues H75 and 116–118; that span reads AHS. D147 serves as a coordination point for Mg(2+). Residues 148 to 149, N177, Y288, and E370 each bind thiamine diphosphate; that span reads GA. Residue N177 participates in Mg(2+) binding.

Belongs to the transketolase family. DXPS subfamily. As to quaternary structure, homodimer. The cofactor is Mg(2+). Thiamine diphosphate serves as cofactor.

It carries out the reaction D-glyceraldehyde 3-phosphate + pyruvate + H(+) = 1-deoxy-D-xylulose 5-phosphate + CO2. The protein operates within metabolic intermediate biosynthesis; 1-deoxy-D-xylulose 5-phosphate biosynthesis; 1-deoxy-D-xylulose 5-phosphate from D-glyceraldehyde 3-phosphate and pyruvate: step 1/1. Catalyzes the acyloin condensation reaction between C atoms 2 and 3 of pyruvate and glyceraldehyde 3-phosphate to yield 1-deoxy-D-xylulose-5-phosphate (DXP). In Cupriavidus taiwanensis (strain DSM 17343 / BCRC 17206 / CCUG 44338 / CIP 107171 / LMG 19424 / R1) (Ralstonia taiwanensis (strain LMG 19424)), this protein is 1-deoxy-D-xylulose-5-phosphate synthase.